Reading from the N-terminus, the 212-residue chain is Transcriptional repressor CcpN (212 aa).

The region spanning 6–70 is the HTH deoR-type domain; sequence LNKRQEHILQ…FYTGKTGTQL (65 aa). Residues 23 to 42 constitute a DNA-binding region (H-T-H motif); that stretch reads ITGEHIAEKLNLTRATLRPD. CBS domains follow at residues 83–139 and 148–211; these read FQSI…QQEL and MTRM…ENEI.

Transcription repressor that binds to the promoter of gapB and pckA genes, preventing their expression. Acts as a regulator for catabolite repression of gluconeogenic genes. The sequence is that of Transcriptional repressor CcpN (ccpN) from Bacillus subtilis (strain 168).